The following is a 427-amino-acid chain: Glutamate-1-semialdehyde 2,1-aminomutase (427 aa).

An N6-(pyridoxal phosphate)lysine modification is found at K265.

The protein belongs to the class-III pyridoxal-phosphate-dependent aminotransferase family. HemL subfamily. As to quaternary structure, homodimer. Requires pyridoxal 5'-phosphate as cofactor.

It localises to the cytoplasm. It carries out the reaction (S)-4-amino-5-oxopentanoate = 5-aminolevulinate. The protein operates within porphyrin-containing compound metabolism; protoporphyrin-IX biosynthesis; 5-aminolevulinate from L-glutamyl-tRNA(Glu): step 2/2. In Pseudomonas fluorescens (strain Pf0-1), this protein is Glutamate-1-semialdehyde 2,1-aminomutase.